The following is a 326-amino-acid chain: Aquaporin-4 (326 aa).

The Cytoplasmic segment spans residues 1–39; that stretch reads MSDGAGAAARRWGKCGGRSCSRESIMVAFKGVWTQAFWK. 2 S-palmitoyl cysteine lipidation sites follow: Cys15 and Cys20. The helical transmembrane segment at 40–60 threads the bilayer; sequence AVTAEFLAMLIFVLLSVGSTI. Over 61–72 the chain is Extracellular; sequence NWGGSENPLPVD. A helical membrane pass occupies residues 73–92; the sequence is MVLISLCFGLSIATMVQCFG. The Cytoplasmic segment spans residues 93–96; that stretch reads HISG. The segment at residues 97 to 104 is an intramembrane region (discontinuously helical); the sequence is GHINPAVT. The NPA 1 signature appears at 100–102; the sequence is NPA. The Cytoplasmic portion of the chain corresponds to 105–118; that stretch reads VAMVCTRKISIAKS. Ser114 bears the Phosphoserine; by PKG mark. Residues 119–139 traverse the membrane as a helical segment; that stretch reads VFYITAQCLGAIIGAGILYLV. Residues 140–158 lie on the Extracellular side of the membrane; that stretch reads TPPNVVGGLGVTTVHGNLT. An N-linked (GlcNAc...) asparagine glycan is attached at Asn156. A helical transmembrane segment spans residues 159–179; that stretch reads AGHGLLVELIITFQLVFTIFA. Residues 180–187 are Cytoplasmic-facing; sequence SCDSKRTD. Ser183 carries the phosphoserine; by PKC modification. A helical membrane pass occupies residues 188 to 208; that stretch reads VTGSIALAIGFSVAIGHLFAI. N-linked (GlcNAc...) asparagine glycosylation occurs at Asn209. Topologically, residues 209–211 are extracellular; the sequence is NYT. Positions 212–225 form an intramembrane region, discontinuously helical; the sequence is GASMNPARSFGPAV. The NPA 2 motif lies at 216-218; it reads NPA. Residues 226-234 lie on the Extracellular side of the membrane; that stretch reads IMGNWENHW. Residues 235-255 form a helical membrane-spanning segment; it reads IYWVGPIIGAVLAGALYEYVF. Residues 256-326 are Cytoplasmic-facing; sequence CPDVELKRRL…DSAGEVLSSV (71 aa). Ser279 and Ser288 each carry phosphoserine. Thr292 carries the phosphothreonine modification. Phosphoserine is present on Ser324.

Belongs to the MIP/aquaporin (TC 1.A.8) family. Homotetramer. The tetramers can form oligomeric arrays in membranes. The size of the oligomers differs between tissues and is smaller in skeletal muscle than in brain. Interaction between AQP4 oligomeric arrays in close-by cells can contribute to cell-cell adhesion. Part of a complex containing MLC1, TRPV4, HEPACAM and ATP1B1. Phosphorylation by PKC at Ser-183 reduces conductance by 50%. Phosphorylation by PKG at Ser-114 in response to glutamate increases conductance by 40%. In terms of processing, isoform Long: Palmitoylated on its N-terminal region.

The protein resides in the cell membrane. The protein localises to the basolateral cell membrane. It localises to the endosome membrane. Its subcellular location is the sarcolemma. It is found in the cell projection. The enzyme catalyses H2O(in) = H2O(out). Forms a water-specific channel. Plays an important role in brain water homeostasis and in glymphatic solute transport. Required for a normal rate of water exchange across the blood brain interface. Required for normal levels of cerebrospinal fluid influx into the brain cortex and parenchyma along paravascular spaces that surround penetrating arteries, and for normal drainage of interstitial fluid along paravenous drainage pathways. Thereby, it is required for normal clearance of solutes from the brain interstitial fluid, including soluble beta-amyloid peptides derived from APP. Plays a redundant role in urinary water homeostasis and urinary concentrating ability. In Notomys alexis (Spinifex hopping mouse), this protein is Aquaporin-4 (AQP4).